The chain runs to 164 residues: Pleckstrin homology domain-containing family J member 1 (164 aa).

In terms of domain architecture, PH spans 15-108 (PAEMAAELGM…WMEALQRASY (94 aa)).

The polypeptide is Pleckstrin homology domain-containing family J member 1 (Plekhj1) (Mus musculus (Mouse)).